Consider the following 369-residue polypeptide: Ribosomal RNA large subunit methyltransferase M (369 aa).

S-adenosyl-L-methionine is bound by residues Ser-198, 231 to 234 (APGG), Asp-250, Asp-270, and Asp-287. Lys-316 (proton acceptor) is an active-site residue.

It belongs to the class I-like SAM-binding methyltransferase superfamily. RNA methyltransferase RlmE family. RlmM subfamily. As to quaternary structure, monomer.

Its subcellular location is the cytoplasm. It carries out the reaction cytidine(2498) in 23S rRNA + S-adenosyl-L-methionine = 2'-O-methylcytidine(2498) in 23S rRNA + S-adenosyl-L-homocysteine + H(+). Its function is as follows. Catalyzes the 2'-O-methylation at nucleotide C2498 in 23S rRNA. This Idiomarina loihiensis (strain ATCC BAA-735 / DSM 15497 / L2-TR) protein is Ribosomal RNA large subunit methyltransferase M.